Reading from the N-terminus, the 198-residue chain is Small ribosomal subunit protein uS4c (198 aa).

One can recognise an S4 RNA-binding domain in the interval 85–145 (LRLDATIFRL…PKKFTIILIC (61 aa)).

It belongs to the universal ribosomal protein uS4 family. In terms of assembly, part of the 30S ribosomal subunit.

It is found in the plastid. It localises to the apicoplast. Its function is as follows. One of the primary rRNA binding proteins, it binds directly to 16S rRNA where it nucleates assembly of the body of the 30S subunit. The protein is Small ribosomal subunit protein uS4c (rps4) of Toxoplasma gondii.